Reading from the N-terminus, the 483-residue chain is UDP-N-acetylmuramoyl-L-alanyl-D-glutamate--2,6-diaminopimelate ligase (483 aa).

Ser30 provides a ligand contact to UDP-N-acetyl-alpha-D-muramoyl-L-alanyl-D-glutamate. 109–115 (GTNGKTT) is an ATP binding site. UDP-N-acetyl-alpha-D-muramoyl-L-alanyl-D-glutamate is bound by residues 151–152 (TT), Ser178, and Arg186. Lys218 carries the post-translational modification N6-carboxylysine. Meso-2,6-diaminopimelate contacts are provided by residues Arg380, 403–406 (DNPR), Gly453, and Glu457. Residues 403–406 (DNPR) carry the Meso-diaminopimelate recognition motif motif.

The protein belongs to the MurCDEF family. MurE subfamily. The cofactor is Mg(2+). Post-translationally, carboxylation is probably crucial for Mg(2+) binding and, consequently, for the gamma-phosphate positioning of ATP.

It localises to the cytoplasm. It carries out the reaction UDP-N-acetyl-alpha-D-muramoyl-L-alanyl-D-glutamate + meso-2,6-diaminopimelate + ATP = UDP-N-acetyl-alpha-D-muramoyl-L-alanyl-gamma-D-glutamyl-meso-2,6-diaminopimelate + ADP + phosphate + H(+). Its pathway is cell wall biogenesis; peptidoglycan biosynthesis. Catalyzes the addition of meso-diaminopimelic acid to the nucleotide precursor UDP-N-acetylmuramoyl-L-alanyl-D-glutamate (UMAG) in the biosynthesis of bacterial cell-wall peptidoglycan. This chain is UDP-N-acetylmuramoyl-L-alanyl-D-glutamate--2,6-diaminopimelate ligase, found in Chlamydia caviae (strain ATCC VR-813 / DSM 19441 / 03DC25 / GPIC) (Chlamydophila caviae).